We begin with the raw amino-acid sequence, 107 residues long: uncharacterized protein (107 aa).

This is an uncharacterized protein from Acanthamoeba polyphaga mimivirus (APMV).